Here is a 156-residue protein sequence, read N- to C-terminus: Transcription elongation factor GreA (156 aa).

A coiled-coil region spans residues 46-66 (AEYHAAREKQSFVEGRIKELE).

The protein belongs to the GreA/GreB family.

Necessary for efficient RNA polymerase transcription elongation past template-encoded arresting sites. The arresting sites in DNA have the property of trapping a certain fraction of elongating RNA polymerases that pass through, resulting in locked ternary complexes. Cleavage of the nascent transcript by cleavage factors such as GreA or GreB allows the resumption of elongation from the new 3'terminus. GreA releases sequences of 2 to 3 nucleotides. The sequence is that of Transcription elongation factor GreA from Paracoccus denitrificans (strain Pd 1222).